We begin with the raw amino-acid sequence, 173 residues long: Alpha-crystallin A chain (173 aa).

At Met1 the chain carries N-acetylmethionine. Residues 52 to 162 form the sHSP domain; the sequence is LFRGFMDSGI…SHSERPIPVS (111 aa). 4 residues coordinate Zn(2+): His100, Glu102, His107, and His154. The segment at 146–173 is disordered; that stretch reads MMSGLDSSHSERPIPVSREEKPTSAPSS. Residues 153–167 show a composition bias toward basic and acidic residues; that stretch reads SHSERPIPVSREEKP.

Belongs to the small heat shock protein (HSP20) family. Heteropolymer composed of three CRYAA and one CRYAB subunits. Inter-subunit bridging via zinc ions enhances stability, which is crucial as there is no protein turn over in the lens. Can also form homodimers and homotetramers (dimers of dimers) which serve as the building blocks of homooligomers. Within homooligomers, the zinc-binding motif is created from residues of 3 different molecules. His-100 and Glu-102 from one molecule are ligands of the zinc ion, and His-107 and His-154 residues from additional molecules complete the site with tetrahedral coordination geometry.

It is found in the cytoplasm. Its subcellular location is the nucleus. Its function is as follows. Contributes to the transparency and refractive index of the lens. May act as a chaperone, preventing aggregation of various proteins under a wide range of stress conditions. This is Alpha-crystallin A chain (CRYAA) from Aquarana catesbeiana (American bullfrog).